A 201-amino-acid polypeptide reads, in one-letter code: Acireductone dioxygenase 2 (201 aa).

4 residues coordinate Fe(2+): His-83, His-85, Glu-89, and His-129. Residues His-83, His-85, Glu-89, and His-129 each coordinate Ni(2+).

It belongs to the acireductone dioxygenase (ARD) family. It depends on Fe(2+) as a cofactor. Ni(2+) serves as cofactor.

It localises to the cytoplasm. The protein resides in the nucleus. The catalysed reaction is 1,2-dihydroxy-5-(methylsulfanyl)pent-1-en-3-one + O2 = 4-methylsulfanyl-2-oxobutanoate + formate + 2 H(+). It carries out the reaction 1,2-dihydroxy-5-(methylsulfanyl)pent-1-en-3-one + O2 = 3-(methylsulfanyl)propanoate + CO + formate + 2 H(+). Its pathway is amino-acid biosynthesis; L-methionine biosynthesis via salvage pathway; L-methionine from S-methyl-5-thio-alpha-D-ribose 1-phosphate: step 5/6. Its function is as follows. Catalyzes 2 different reactions between oxygen and the acireductone 1,2-dihydroxy-3-keto-5-methylthiopentene (DHK-MTPene) depending upon the metal bound in the active site. Fe-containing acireductone dioxygenase (Fe-ARD) produces formate and 2-keto-4-methylthiobutyrate (KMTB), the alpha-ketoacid precursor of methionine in the methionine recycle pathway. Ni-containing acireductone dioxygenase (Ni-ARD) produces methylthiopropionate, carbon monoxide and formate, and does not lie on the methionine recycle pathway. The protein is Acireductone dioxygenase 2 of Coprinopsis cinerea (strain Okayama-7 / 130 / ATCC MYA-4618 / FGSC 9003) (Inky cap fungus).